Here is a 130-residue protein sequence, read N- to C-terminus: Prefoldin subunit alpha (130 aa).

Belongs to the prefoldin subunit alpha family. As to quaternary structure, heterohexamer of two alpha and four beta subunits.

The protein resides in the cytoplasm. Functionally, molecular chaperone capable of stabilizing a range of proteins. Seems to fulfill an ATP-independent, HSP70-like function in archaeal de novo protein folding. The sequence is that of Prefoldin subunit alpha from Thermoplasma volcanium (strain ATCC 51530 / DSM 4299 / JCM 9571 / NBRC 15438 / GSS1).